A 447-amino-acid polypeptide reads, in one-letter code: Argininosuccinate synthase (447 aa).

ATP is bound by residues 17–25 (AFSGGLDTS) and Ala43. Residue Tyr99 coordinates L-citrulline. Positions 129 and 131 each coordinate ATP. Residues Thr131, Asn135, and Asp136 each contribute to the L-aspartate site. Residue Asn135 coordinates L-citrulline. An ATP-binding site is contributed by Asp136. L-citrulline contacts are provided by Arg139 and Ser192. An ATP-binding site is contributed by Asp194. Residues Thr201, Glu203, and Glu280 each contribute to the L-citrulline site.

The protein belongs to the argininosuccinate synthase family. Type 2 subfamily. In terms of assembly, homotetramer.

It localises to the cytoplasm. It carries out the reaction L-citrulline + L-aspartate + ATP = 2-(N(omega)-L-arginino)succinate + AMP + diphosphate + H(+). The protein operates within amino-acid biosynthesis; L-arginine biosynthesis; L-arginine from L-ornithine and carbamoyl phosphate: step 2/3. This chain is Argininosuccinate synthase, found in Salmonella dublin (strain CT_02021853).